A 414-amino-acid chain; its full sequence is MSSTPSTSDTSSESSTSPATIVLCKVCALSAHGSHFGVLACRACAAFFRRTVVLERQKQYKCKKGKNECPVDTAERYQCRLCRYNKCVDLGMTPENVQFNRESASRTRKRKNENSIAQTNSFKLIPRSDNAFLGKPRTIMDISSLSTKIKSVLNGKTYNLDSAAKKMNSLEAAEYALKKWRSQQKTEDKMEKVGELPVRQLFVIFEKQMVMIAEWLIHNPDFRMLDEEEKYLYFKAVWNMWRRFERFEMSVKMFGNQVLTKRKFAISNEKLMVMDSCIDYSEITDLPNSKVAEMFRLTRSKLFHQLAKPLMELNPSSIEMAYMLTQLSWQIAGKKMQGNVIEIGERVCDNLADDLHSYYQKNEKRSNYAGRLVRLMNIVNAMKKIHLQRKNTMELARIFEMFKVDFSDPDIFDC.

The segment at residues 21-99 (IVLCKVCALS…LGMTPENVQF (79 aa)) is a DNA-binding region (nuclear receptor). 2 NR C4-type zinc fingers span residues 24–44 (CKVC…CRAC) and 62–82 (CKKG…CRLC). The 253-residue stretch at 162–414 (SAAKKMNSLE…DFSDPDIFDC (253 aa)) folds into the NR LBD domain.

This sequence belongs to the nuclear hormone receptor family.

The protein resides in the nucleus. Functionally, orphan nuclear receptor. The polypeptide is Nuclear hormone receptor family member nhr-213 (nhr-213) (Caenorhabditis elegans).